Consider the following 300-residue polypeptide: Probable membrane transporter protein YtnM (300 aa).

Transmembrane regions (helical) follow at residues 4 to 24 (LIVF…LGMA), 33 to 53 (LLAF…AEVV), 76 to 96 (LVIP…QLPG), 102 to 122 (YISL…LFQY), 139 to 159 (IPLG…WGPV), 206 to 226 (LWVF…AWLV), 231 to 251 (PQLM…RTLI), and 260 to 280 (VHPL…LFVL).

The protein belongs to the 4-toluene sulfonate uptake permease (TSUP) (TC 2.A.102) family.

Its subcellular location is the cell membrane. This Bacillus subtilis (strain 168) protein is Probable membrane transporter protein YtnM (ytnM).